The sequence spans 459 residues: Vacuolar fusion protein CCZ1 homolog (459 aa).

Belongs to the CCZ1 family.

The polypeptide is Vacuolar fusion protein CCZ1 homolog (Nematostella vectensis (Starlet sea anemone)).